The chain runs to 105 residues: TPR repeat-containing protein PA0015 (105 aa).

TPR repeat units lie at residues 17-50 (ALLRFGLGKGYLDAGDAERAAEHLQRCVEQDPKY) and 52-84 (AGWKLLGKARQAAGDLAGARQAWEQGLATAATH).

The polypeptide is TPR repeat-containing protein PA0015 (Pseudomonas aeruginosa (strain ATCC 15692 / DSM 22644 / CIP 104116 / JCM 14847 / LMG 12228 / 1C / PRS 101 / PAO1)).